The sequence spans 282 residues: Glycine betaine transport system permease protein OpuAB (282 aa).

Over 1 to 18 the chain is Extracellular; the sequence is MDRLPRIPLADIIDRFVD. The chain crosses the membrane as a helical span at residues 19 to 39; sequence WITMTFGGFFDGIANGLAAFV. Over 40–44 the chain is Cytoplasmic; the sequence is NGIVT. The chain crosses the membrane as a helical span at residues 45 to 65; that stretch reads GLGFIPSILLTIIFAALAWWI. The Extracellular portion of the chain corresponds to 66-69; sequence STRG. The chain crosses the membrane as a helical span at residues 70–90; sequence IALFTLIGFLLIDYLGYWDPM. An ABC transmembrane type-1 domain is found at 90–269; it reads MLQTLALVLT…IVAITLDRIT (180 aa). Residues 91 to 93 lie on the Cytoplasmic side of the membrane; sequence LQT. A helical transmembrane segment spans residues 94–114; it reads LALVLTSVIISIVVGVPIGIW. The Extracellular portion of the chain corresponds to 115-137; it reads ASQKETVRRIVTPILDLMQTMPA. Residues 138–158 traverse the membrane as a helical segment; that stretch reads FVYLLPAIFFFNIGVVPGVVA. Over 159-215 the chain is Cytoplasmic; the sequence is SVIFAMPPTIRMTVLGIKQVPADLIEATEAFGSTTAQRLFKVQLPLATKTILAGINQ. The chain crosses the membrane as a helical span at residues 216–236; it reads SIMLALSMVVIAAMVGAPGLG. Over 237–242 the chain is Extracellular; it reads SEVYSA. The chain crosses the membrane as a helical span at residues 243-263; that stretch reads VTQLKTGVGVEAGIAIVIVAI. Residues 264 to 282 are Cytoplasmic-facing; the sequence is TLDRITQNIKVKKKSRGNA.

It belongs to the binding-protein-dependent transport system permease family. CysTW subfamily. In terms of assembly, the complex is composed of two ATP-binding proteins (OpuAA), two transmembrane proteins (OpuAB) and a solute-binding protein (OpuAC).

The protein localises to the cell membrane. Its function is as follows. Involved in a multicomponent binding-protein-dependent transport system for glycine betaine; probably responsible for the translocation of the substrate across the membrane. This is Glycine betaine transport system permease protein OpuAB (opuAB) from Bacillus subtilis (strain 168).